The primary structure comprises 1849 residues: Brefeldin A-inhibited guanine nucleotide-exchange protein 1 (1849 aa).

Residues 2-224 form a DCB; DCB:DCB domain and DCB:HUS domain interaction region; it reads YEGKKTKNMF…QEAKQMEKER (223 aa). Over residues 46–58 the composition is skewed to basic and acidic residues; sequence AETEKQSPPHGEA. Disordered stretches follow at residues 46 to 65, 216 to 248, 267 to 302, and 378 to 413; these read AETE…SSTL, EAKQ…QLRY, LHTN…DQAT, and TPIS…SPGA. At S52 the chain carries Phosphoserine. The span at 267–277 shows a compositional bias: basic and acidic residues; the sequence is LHTNDVDKSLQ. A phosphoserine mark is found at S286, S289, S290, S397, and S410. Positions 394–409 are enriched in polar residues; the sequence is SVSSNDTQESGNSSGP. The tract at residues 557–577 is HUS; DCB:HUS domain interaction; the sequence is ADAQSVVDIYVNYDCDLNAAN. The SEC7 domain maps to 709-840; sequence FNKKPKRGIQ…IIMLTTDLHS (132 aa). Positions 711–715 match the Nuclear localization signal (NLS) motif; sequence KKPKR. Phosphoserine is present on S1079. The interval 1543–1562 is disordered; it reads RPNSGETAPPPPSPVSEKPL. 2 positions are modified to phosphoserine: S1566 and S1569.

In terms of assembly, homodimer. Interacts with ARFGEF2/BIG2; both proteins are probably part of the same or very similar macromolecular complexes. Interacts with FKBP2. Interacts with MYO9B. Interacts with PRKAR1A and PRKAR2A. Interacts with PPP1CC. Interacts with NCL, FBL, NUP62 and U3 small nucleolar RNA. Interacts with DPY30. Interacts with PDE3A. Interacts with KANK1. Interacts with TBC1D22A and TBC1D22B. Interacts (via N-terminus) with ARL1. Phosphorylated. In vitro phosphorylated by PKA reducing its GEF activity and dephosphorylated by phosphatase PP1. As to expression, expressed in placenta, lung, heart, brain, kidney and pancreas.

It localises to the cytoplasm. The protein localises to the perinuclear region. It is found in the golgi apparatus. Its subcellular location is the trans-Golgi network membrane. The protein resides in the nucleus. It localises to the nucleolus. The protein localises to the nucleus matrix. With respect to regulation, inhibited by brefeldin A. Its function is as follows. Promotes guanine-nucleotide exchange on ARF1 and ARF3. Promotes the activation of ARF1/ARF3 through replacement of GDP with GTP. Involved in vesicular trafficking. Required for the maintenance of Golgi structure; the function may be independent of its GEF activity. Required for the maturation of integrin beta-1 in the Golgi. Involved in the establishment and persistence of cell polarity during directed cell movement in wound healing. Proposed to act as A kinase-anchoring protein (AKAP) and may mediate crosstalk between Arf and PKA pathways. Inhibits GAP activity of MYO9B probably through competitive RhoA binding. The function in the nucleus remains to be determined. The sequence is that of Brefeldin A-inhibited guanine nucleotide-exchange protein 1 (ARFGEF1) from Homo sapiens (Human).